Consider the following 275-residue polypeptide: Elongation factor Ts (275 aa).

The segment at 76 to 79 is involved in Mg(2+) ion dislocation from EF-Tu; that stretch reads TDFV.

This sequence belongs to the EF-Ts family.

The protein resides in the cytoplasm. Associates with the EF-Tu.GDP complex and induces the exchange of GDP to GTP. It remains bound to the aminoacyl-tRNA.EF-Tu.GTP complex up to the GTP hydrolysis stage on the ribosome. This chain is Elongation factor Ts, found in Corynebacterium kroppenstedtii (strain DSM 44385 / JCM 11950 / CIP 105744 / CCUG 35717).